An 88-amino-acid chain; its full sequence is MIKNLSISSSLIPDKQRGSVESQVFFLTNRVLRLTQHLQLHGRDYSSQRGLWLILSKRKQLLVYLSKRDKLRYDDLIGQLSIRRLKTR.

It belongs to the universal ribosomal protein uS15 family. In terms of assembly, part of the 30S ribosomal subunit.

It localises to the plastid. The protein resides in the chloroplast. The sequence is that of Small ribosomal subunit protein uS15c (rps15) from Pinus koraiensis (Korean pine).